The chain runs to 571 residues: Dihydroxy-acid dehydratase (571 aa).

Cys56 provides a ligand contact to [2Fe-2S] cluster. Asp88 is a binding site for Mg(2+). A [2Fe-2S] cluster-binding site is contributed by Cys129. Residues Asp130 and Lys131 each coordinate Mg(2+). Residue Lys131 is modified to N6-carboxylysine. Residue Cys201 participates in [2Fe-2S] cluster binding. Residue Glu452 coordinates Mg(2+). Catalysis depends on Ser478, which acts as the Proton acceptor.

It belongs to the IlvD/Edd family. As to quaternary structure, homodimer. Requires [2Fe-2S] cluster as cofactor. It depends on Mg(2+) as a cofactor.

The catalysed reaction is (2R)-2,3-dihydroxy-3-methylbutanoate = 3-methyl-2-oxobutanoate + H2O. The enzyme catalyses (2R,3R)-2,3-dihydroxy-3-methylpentanoate = (S)-3-methyl-2-oxopentanoate + H2O. Its pathway is amino-acid biosynthesis; L-isoleucine biosynthesis; L-isoleucine from 2-oxobutanoate: step 3/4. The protein operates within amino-acid biosynthesis; L-valine biosynthesis; L-valine from pyruvate: step 3/4. In terms of biological role, functions in the biosynthesis of branched-chain amino acids. Catalyzes the dehydration of (2R,3R)-2,3-dihydroxy-3-methylpentanoate (2,3-dihydroxy-3-methylvalerate) into 2-oxo-3-methylpentanoate (2-oxo-3-methylvalerate) and of (2R)-2,3-dihydroxy-3-methylbutanoate (2,3-dihydroxyisovalerate) into 2-oxo-3-methylbutanoate (2-oxoisovalerate), the penultimate precursor to L-isoleucine and L-valine, respectively. This Streptococcus mutans serotype c (strain ATCC 700610 / UA159) protein is Dihydroxy-acid dehydratase.